The chain runs to 315 residues: Methionyl-tRNA formyltransferase (315 aa).

Residue 113-116 (SLLP) participates in (6S)-5,6,7,8-tetrahydrofolate binding.

This sequence belongs to the Fmt family.

It carries out the reaction L-methionyl-tRNA(fMet) + (6R)-10-formyltetrahydrofolate = N-formyl-L-methionyl-tRNA(fMet) + (6S)-5,6,7,8-tetrahydrofolate + H(+). Attaches a formyl group to the free amino group of methionyl-tRNA(fMet). The formyl group appears to play a dual role in the initiator identity of N-formylmethionyl-tRNA by promoting its recognition by IF2 and preventing the misappropriation of this tRNA by the elongation apparatus. The sequence is that of Methionyl-tRNA formyltransferase from Shigella sonnei (strain Ss046).